A 293-amino-acid chain; its full sequence is Outer membrane protein assembly factor BamD (293 aa).

The first 26 residues, 1-26, serve as a signal peptide directing secretion; it reads MIQRPTFFSPIHLLAVLLATFILITG. The N-palmitoyl cysteine moiety is linked to residue cysteine 27. Cysteine 27 carries the S-diacylglycerol cysteine lipid modification.

It belongs to the BamD family. In terms of assembly, part of the Bam complex.

It localises to the cell outer membrane. Its function is as follows. Part of the outer membrane protein assembly complex, which is involved in assembly and insertion of beta-barrel proteins into the outer membrane. The chain is Outer membrane protein assembly factor BamD from Xylella fastidiosa (strain Temecula1 / ATCC 700964).